The chain runs to 2350 residues: Probable JmjC domain-containing histone demethylation protein 2C (2350 aa).

Disordered stretches follow at residues 96–302 and 314–336; these read TRAQ…LQEC and PKDRLVSRTPTPKCVTDIKNDTH. Over residues 98–127 the composition is skewed to polar residues; sequence AQANSPRPAMNSQAAVPKQNTHQQQQQRSI. Residues serine 135 and serine 138 each carry the phosphoserine modification. Residues 141–160 show a composition bias toward basic and acidic residues; the sequence is DEEKMKEDKYDCVSRGENPK. Basic residues predominate over residues 161–171; sequence GKNKHVVTKRR. Positions 172–189 are enriched in basic and acidic residues; the sequence is KPEEAEKRLSMKRLRTDN. Positions 190 to 200 are enriched in low complexity; the sequence is ASDASESSDAE. Phosphoserine occurs at positions 191 and 194. Residues 257–280 show a composition bias toward basic and acidic residues; sequence QEDKNHNEGEKPKSTDSHLQDKMT. The span at 281–302 shows a compositional bias: polar residues; it reads LRSSEQATVADHNSNDSVLQEC. Serine 294 and serine 320 each carry phosphoserine. Residue threonine 324 is modified to Phosphothreonine. Phosphoserine occurs at positions 420, 436, 457, 458, 460, 471, and 762. Disordered stretches follow at residues 426 to 486, 747 to 766, 859 to 883, 1030 to 1083, and 1422 to 1508; these read SVTE…NSQA, SSAEPHRPHKITVHSSPPLT, RENYSRVVPSSSSPKSHAIKQDKDV, RKES…DQSL, and EKVS…VPRS. Composition is skewed to low complexity over residues 863–874 and 1034–1045; these read SRVVPSSSSPKS and SYSSLSPPTLTP. Polar residues predominate over residues 1071-1083; it reads SQSNFKNSSDQSL. Residues 1454 to 1463 are compositionally biased toward basic residues; sequence KRQPKPTYKK. Basic and acidic residues predominate over residues 1464–1480; the sequence is KQNDLQKRKGEVEEDSK. A C6-type zinc finger spans residues 1657-1682; it reads CDACEATLFNVHWVCRKCGFVACLDC. A compositionally biased stretch (polar residues) spans 1776–1818; that stretch reads KTSVSLPESQQQNSPQKSQTNGNSSPGSASTDSRLTPPESQSP. The segment at 1776-1874 is disordered; that stretch reads KTSVSLPESQ…PASQSNEQGS (99 aa). A Phosphoserine modification is found at serine 1800. The span at 1826–1849 shows a compositional bias: basic and acidic residues; it reads AEQKSREEKQENKEFTLEREIKED. Polar residues predominate over residues 1855-1874; that stretch reads SDSPNGSTSPPASQSNEQGS. Residues 1876–1880 carry the LXXLL motif motif; the sequence is LRDLL. Residues 1933–1962 are disordered; sequence PNKTSKINIKSEPNEEPKESSLPATDESNK. Lysine 1942 is covalently cross-linked (Glycyl lysine isopeptide (Lys-Gly) (interchain with G-Cter in SUMO2)). In terms of domain architecture, JmjC spans 2084 to 2308; that stretch reads MPTRYEDFLR…QSFHLTQELR (225 aa). Fe cation-binding residues include histidine 2146, glutamate 2148, and histidine 2276.

The protein belongs to the JHDM2 histone demethylase family. Fe(2+) is required as a cofactor.

The protein localises to the nucleus. In terms of biological role, probable histone demethylase that specifically demethylates 'Lys-9' of histone H3, thereby playing a central role in histone code. Demethylation of Lys residue generates formaldehyde and succinate. May be involved in hormone-dependent transcriptional activation, by participating in recruitment to androgen-receptor target genes. This Mus musculus (Mouse) protein is Probable JmjC domain-containing histone demethylation protein 2C (Jmjd1c).